The sequence spans 206 residues: Large ribosomal subunit protein uL4 (206 aa).

Residues 47–77 (GTHDTKTRGEVSGGGRKPWRQKGTGRARHGS) form a disordered region. The span at 63–77 (KPWRQKGTGRARHGS) shows a compositional bias: basic residues.

It belongs to the universal ribosomal protein uL4 family. In terms of assembly, part of the 50S ribosomal subunit.

One of the primary rRNA binding proteins, this protein initially binds near the 5'-end of the 23S rRNA. It is important during the early stages of 50S assembly. It makes multiple contacts with different domains of the 23S rRNA in the assembled 50S subunit and ribosome. In terms of biological role, forms part of the polypeptide exit tunnel. The polypeptide is Large ribosomal subunit protein uL4 (Carboxydothermus hydrogenoformans (strain ATCC BAA-161 / DSM 6008 / Z-2901)).